Here is a 151-residue protein sequence, read N- to C-terminus: MKQKADNLIAQNKKANHDYFIKETLEAGIALTGTEIKSIRARRINLRDGYVQIINGSAFLENVHISEYKEGNRYNHDPLRSRRLLLHKREIARLAGIQAQQGMAIIPLKVYLKHGFAKVLIGVGQGKKQYDKRQTIKKRDQDREIHRKYGI.

Residues 132–151 (KRQTIKKRDQDREIHRKYGI) form a disordered region.

It belongs to the SmpB family.

Its subcellular location is the cytoplasm. Its function is as follows. Required for rescue of stalled ribosomes mediated by trans-translation. Binds to transfer-messenger RNA (tmRNA), required for stable association of tmRNA with ribosomes. tmRNA and SmpB together mimic tRNA shape, replacing the anticodon stem-loop with SmpB. tmRNA is encoded by the ssrA gene; the 2 termini fold to resemble tRNA(Ala) and it encodes a 'tag peptide', a short internal open reading frame. During trans-translation Ala-aminoacylated tmRNA acts like a tRNA, entering the A-site of stalled ribosomes, displacing the stalled mRNA. The ribosome then switches to translate the ORF on the tmRNA; the nascent peptide is terminated with the 'tag peptide' encoded by the tmRNA and targeted for degradation. The ribosome is freed to recommence translation, which seems to be the essential function of trans-translation. In Lactobacillus gasseri (strain ATCC 33323 / DSM 20243 / BCRC 14619 / CIP 102991 / JCM 1131 / KCTC 3163 / NCIMB 11718 / NCTC 13722 / AM63), this protein is SsrA-binding protein.